The sequence spans 323 residues: Acetyl esterase (323 aa).

Residues His-91–Gly-93 carry the Involved in the stabilization of the negatively charged intermediate by the formation of the oxyanion hole motif. Active-site residues include Ser-165, Asp-262, and His-292.

It belongs to the 'GDXG' lipolytic enzyme family. As to quaternary structure, homodimer. Interacts with MalT and MelA.

It is found in the cytoplasm. In terms of biological role, displays esterase activity towards short chain fatty esters (acyl chain length of up to 8 carbons). Able to hydrolyze triacetylglycerol (triacetin) and tributyrylglycerol (tributyrin), but not trioleylglycerol (triolein) or cholesterol oleate. Negatively regulates MalT activity by antagonizing maltotriose binding. Inhibits MelA galactosidase activity. The polypeptide is Acetyl esterase (Salmonella choleraesuis (strain SC-B67)).